Here is a 391-residue protein sequence, read N- to C-terminus: 1-deoxy-D-xylulose 5-phosphate reductoisomerase (391 aa).

Asparagine 109 contacts NADPH. Lysine 110 contributes to the 1-deoxy-D-xylulose 5-phosphate binding site. Glutamate 111 is an NADPH binding site. Aspartate 135 is a binding site for Mn(2+). Serine 136, glutamate 137, serine 171, and histidine 194 together coordinate 1-deoxy-D-xylulose 5-phosphate. Mn(2+) is bound at residue glutamate 137. An NADPH-binding site is contributed by glycine 200. The 1-deoxy-D-xylulose 5-phosphate site is built by serine 207, asparagine 212, arginine 213, and glutamate 216. Position 216 (glutamate 216) interacts with Mn(2+).

It belongs to the DXR family. In terms of assembly, homodimer. Mg(2+) serves as cofactor. The cofactor is Mn(2+).

The catalysed reaction is 2-C-methyl-D-erythritol 4-phosphate + NADP(+) = 1-deoxy-D-xylulose 5-phosphate + NADPH + H(+). The protein operates within isoprenoid biosynthesis; isopentenyl diphosphate biosynthesis via DXP pathway; isopentenyl diphosphate from 1-deoxy-D-xylulose 5-phosphate: step 1/6. In terms of biological role, catalyzes the NADPH-dependent rearrangement and reduction of 1-deoxy-D-xylulose-5-phosphate (DXP) to 2-C-methyl-D-erythritol 4-phosphate (MEP). This is 1-deoxy-D-xylulose 5-phosphate reductoisomerase from Blochmanniella floridana.